Here is a 182-residue protein sequence, read N- to C-terminus: Adenine phosphoribosyltransferase (182 aa).

The protein belongs to the purine/pyrimidine phosphoribosyltransferase family. In terms of assembly, homodimer.

It is found in the cytoplasm. The enzyme catalyses AMP + diphosphate = 5-phospho-alpha-D-ribose 1-diphosphate + adenine. It functions in the pathway purine metabolism; AMP biosynthesis via salvage pathway; AMP from adenine: step 1/1. Catalyzes a salvage reaction resulting in the formation of AMP, that is energically less costly than de novo synthesis. This chain is Adenine phosphoribosyltransferase, found in Stutzerimonas stutzeri (Pseudomonas stutzeri).